Consider the following 397-residue polypeptide: Acetate kinase (397 aa).

N7 is a Mg(2+) binding site. K14 provides a ligand contact to ATP. R91 serves as a coordination point for substrate. D148 serves as the catalytic Proton donor/acceptor. ATP contacts are provided by residues 208–212 (HLGNG), 283–285 (DFR), and 331–335 (GLGEN). Mg(2+) is bound at residue E383.

This sequence belongs to the acetokinase family. Homodimer. It depends on Mg(2+) as a cofactor. The cofactor is Mn(2+).

Its subcellular location is the cytoplasm. The catalysed reaction is acetate + ATP = acetyl phosphate + ADP. It participates in metabolic intermediate biosynthesis; acetyl-CoA biosynthesis; acetyl-CoA from acetate: step 1/2. Its function is as follows. Catalyzes the formation of acetyl phosphate from acetate and ATP. Can also catalyze the reverse reaction. This is Acetate kinase from Heliobacterium modesticaldum (strain ATCC 51547 / Ice1).